Here is a 298-residue protein sequence, read N- to C-terminus: Zinc import ATP-binding protein ZnuC (298 aa).

The region spanning 17-232 (IELRNAGVYR…PEYVRLFGSR (216 aa)) is the ABC transporter domain. 49 to 56 (GQNGAGKS) is a binding site for ATP. Residues 273 to 298 (RGHCHVEDGHHHDHEHHHHEGGQPRA) are disordered. Basic and acidic residues predominate over residues 276–298 (CHVEDGHHHDHEHHHHEGGQPRA).

It belongs to the ABC transporter superfamily. Zinc importer (TC 3.A.1.15.5) family. As to quaternary structure, the complex is composed of two ATP-binding proteins (ZnuC), two transmembrane proteins (ZnuB) and a solute-binding protein (ZnuA).

The protein resides in the cell inner membrane. The enzyme catalyses Zn(2+)(out) + ATP(in) + H2O(in) = Zn(2+)(in) + ADP(in) + phosphate(in) + H(+)(in). Functionally, part of the ABC transporter complex ZnuABC involved in zinc import. Responsible for energy coupling to the transport system. The sequence is that of Zinc import ATP-binding protein ZnuC from Brucella melitensis biotype 1 (strain ATCC 23456 / CCUG 17765 / NCTC 10094 / 16M).